Here is a 1678-residue protein sequence, read N- to C-terminus: Hispidin synthase (1678 aa).

The adenylation (A) domain stretch occupies residues 33–453 (GEHRWSYREL…WLGRNTDFIQ (421 aa)). Positions 586 to 661 (DELSNTVKHI…SLSNAVYAKL (76 aa)) constitute a Carrier 1 domain. Ser-620 carries the O-(pantetheine 4'-phosphoryl)serine modification. The region spanning 683–1108 (GKEIVVVGQA…GTLGGIVLEA (426 aa)) is the Ketosynthase family 3 (KS3) domain. Active-site for beta-ketoacyl synthase activity residues include Cys-852, His-988, and His-1029. The tract at residues 1201-1499 (YKRGALAFAF…VAWSLLLSNG (299 aa)) is malonyl-CoA:ACP transacylase (MAT) domain. A disordered region spans residues 1562 to 1582 (EETLSSGSSTPTLENTDLDSG). Residues 1564–1576 (TLSSGSSTPTLEN) are compositionally biased toward polar residues. The region spanning 1597 to 1672 (DDLRDSIVSS…EMVSNLVEQA (76 aa)) is the Carrier 2 domain. The residue at position 1632 (Ser-1632) is an O-(pantetheine 4'-phosphoryl)serine.

In the N-terminal section; belongs to the NRP synthetase family.

It catalyses the reaction (E)-caffeate + 2 malonyl-CoA + ATP + H(+) = hispidin + AMP + 2 CO2 + diphosphate + 2 CoA. It participates in secondary metabolite biosynthesis. Functionally, PKS-NRPS hybrid synthetase; part of the gene cluster that mediates the fungal bioluminescence cycle. Performs the biosynthesis of hispidin from caffeic acid by two cycles of addition of malonyl units followed by lactonization. The fungal bioluminescence cycle begins with the hispidin synthetase that catalyzes the formation of hispidin which is further hydroxylated by the hispidin-3-hydroxylase, yielding the fungal luciferin 3-hydroxyhispidin. The luciferase then produces an endoperoxide as a high-energy intermediate with decomposition that yields oxyluciferin (also known as caffeoylpyruvate) and light emission. Oxyluciferin can be recycled to caffeic acid by caffeoylpyruvate hydrolase. The chain is Hispidin synthase from Neonothopanus nambi (Agaricus nambi).